The chain runs to 118 residues: UPF0251 protein TTE1845 (118 aa).

It belongs to the UPF0251 family.

The polypeptide is UPF0251 protein TTE1845 (Caldanaerobacter subterraneus subsp. tengcongensis (strain DSM 15242 / JCM 11007 / NBRC 100824 / MB4) (Thermoanaerobacter tengcongensis)).